The chain runs to 165 residues: MYIEMIDETGQVSAQMQEQITELLQFAAEKIGKQNKEMAVTFVDNKRVHEVNLEYRGIDRPTDVVSLEYKPESEIVFDEEDLLDNPELAEMMEDFDAYIGELYISIDKAREQAEDYGHSYEREMGFLAVHGFLHINGYDHYTPEEEAEMFGLQEEILTAYGLTRE.

3 residues coordinate Zn(2+): His130, His134, and His140.

Belongs to the endoribonuclease YbeY family. It depends on Zn(2+) as a cofactor.

Its subcellular location is the cytoplasm. In terms of biological role, single strand-specific metallo-endoribonuclease involved in late-stage 70S ribosome quality control and in maturation of the 3' terminus of the 16S rRNA. This Streptococcus suis (strain 98HAH33) protein is Endoribonuclease YbeY.